The following is a 271-amino-acid chain: Energy-coupling factor transporter ATP-binding protein EcfA (271 aa).

The region spanning Ile2–Asn231 is the ABC transporter domain. Gly34–Ser41 lines the ATP pocket.

It belongs to the ABC transporter superfamily. Energy-coupling factor EcfA family. Forms a stable energy-coupling factor (ECF) transporter complex composed of 2 membrane-embedded substrate-binding proteins (S component), 2 ATP-binding proteins (A component) and 2 transmembrane proteins (T component).

It localises to the cell membrane. ATP-binding (A) component of a common energy-coupling factor (ECF) ABC-transporter complex. Unlike classic ABC transporters this ECF transporter provides the energy necessary to transport a number of different substrates. This Onion yellows phytoplasma (strain OY-M) protein is Energy-coupling factor transporter ATP-binding protein EcfA.